Consider the following 131-residue polypeptide: Sirohydrochlorin cobaltochelatase (131 aa).

Catalysis depends on His-12, which acts as the Proton acceptor. The Co(2+) site is built by His-12 and His-78. The Ni(2+) site is built by His-12 and His-78. Substrate is bound at residue 73–78; it reads LASGVH.

Belongs to the CbiX family. CbiXS subfamily. As to quaternary structure, homotetramer; dimer of dimers.

The enzyme catalyses Co-sirohydrochlorin + 2 H(+) = sirohydrochlorin + Co(2+). It catalyses the reaction Ni-sirohydrochlorin + 2 H(+) = sirohydrochlorin + Ni(2+). The protein operates within cofactor biosynthesis; adenosylcobalamin biosynthesis; cob(II)yrinate a,c-diamide from sirohydrochlorin (anaerobic route): step 1/10. In terms of biological role, catalyzes the insertion of Co(2+) into sirohydrochlorin as part of the anaerobic pathway to cobalamin biosynthesis. Involved in the biosynthesis of the unique nickel-containing tetrapyrrole coenzyme F430, the prosthetic group of methyl-coenzyme M reductase (MCR), which plays a key role in methanogenesis and anaerobic methane oxidation. Catalyzes the insertion of Ni(2+) into sirohydrochlorin to yield Ni-sirohydrochlorin. The protein is Sirohydrochlorin cobaltochelatase of Methanococcoides burtonii (strain DSM 6242 / NBRC 107633 / OCM 468 / ACE-M).